Consider the following 252-residue polypeptide: Trans-aconitate 2-methyltransferase (252 aa).

It belongs to the methyltransferase superfamily. Tam family.

The protein localises to the cytoplasm. It carries out the reaction trans-aconitate + S-adenosyl-L-methionine = (E)-3-(methoxycarbonyl)pent-2-enedioate + S-adenosyl-L-homocysteine. In terms of biological role, catalyzes the S-adenosylmethionine monomethyl esterification of trans-aconitate. The protein is Trans-aconitate 2-methyltransferase of Shigella flexneri serotype 5b (strain 8401).